A 154-amino-acid polypeptide reads, in one-letter code: Large ribosomal subunit protein uL13 (154 aa).

This sequence belongs to the universal ribosomal protein uL13 family. As to quaternary structure, part of the 50S ribosomal subunit.

Its function is as follows. This protein is one of the early assembly proteins of the 50S ribosomal subunit, although it is not seen to bind rRNA by itself. It is important during the early stages of 50S assembly. This is Large ribosomal subunit protein uL13 from Bradyrhizobium sp. (strain BTAi1 / ATCC BAA-1182).